Consider the following 355-residue polypeptide: Peptide chain release factor 1 (355 aa).

At Gln234 the chain carries N5-methylglutamine.

It belongs to the prokaryotic/mitochondrial release factor family. In terms of processing, methylated by PrmC. Methylation increases the termination efficiency of RF1.

Its subcellular location is the cytoplasm. Peptide chain release factor 1 directs the termination of translation in response to the peptide chain termination codons UAG and UAA. The chain is Peptide chain release factor 1 from Metamycoplasma arthritidis (strain 158L3-1) (Mycoplasma arthritidis).